The sequence spans 316 residues: Acetyl-coenzyme A carboxylase carboxyl transferase subunit beta (316 aa).

A CoA carboxyltransferase N-terminal domain is found at 39-308; sequence LWHKCSKCGV…TPPMVLWETM (270 aa). Cys43, Cys46, Cys62, and Cys65 together coordinate Zn(2+). A C4-type zinc finger spans residues 43–65; sequence CSKCGVLTYTKDLRANQMVCVEC.

This sequence belongs to the AccD/PCCB family. As to quaternary structure, acetyl-CoA carboxylase is a heterohexamer composed of biotin carboxyl carrier protein (AccB), biotin carboxylase (AccC) and two subunits each of ACCase subunit alpha (AccA) and ACCase subunit beta (AccD). Requires Zn(2+) as cofactor.

The protein localises to the cytoplasm. It catalyses the reaction N(6)-carboxybiotinyl-L-lysyl-[protein] + acetyl-CoA = N(6)-biotinyl-L-lysyl-[protein] + malonyl-CoA. Its pathway is lipid metabolism; malonyl-CoA biosynthesis; malonyl-CoA from acetyl-CoA: step 1/1. Functionally, component of the acetyl coenzyme A carboxylase (ACC) complex. Biotin carboxylase (BC) catalyzes the carboxylation of biotin on its carrier protein (BCCP) and then the CO(2) group is transferred by the transcarboxylase to acetyl-CoA to form malonyl-CoA. The sequence is that of Acetyl-coenzyme A carboxylase carboxyl transferase subunit beta from Trichormus variabilis (strain ATCC 29413 / PCC 7937) (Anabaena variabilis).